Consider the following 445-residue polypeptide: Chromosomal replication initiator protein DnaA (445 aa).

Positions 1-71 (MEEVWLQAQS…SVQSLTDSQT (71 aa)) are domain I, interacts with DnaA modulators. Residues 71 to 108 (TKIELLIAKPKTEKPKQPAASEVTAAEPEACSGPDHST) form a domain II region. A disordered region spans residues 83–106 (EKPKQPAASEVTAAEPEACSGPDH). The interval 109–325 (NLNPKYTFDT…GMLIRLGAVS (217 aa)) is domain III, AAA+ region. Residues G153, G155, K156, and T157 each contribute to the ATP site. A domain IV, binds dsDNA region spans residues 326-445 (SLTGKNITLD…VDTLRKGLLS (120 aa)).

This sequence belongs to the DnaA family. Oligomerizes as a right-handed, spiral filament on DNA at oriC.

It is found in the cytoplasm. Plays an essential role in the initiation and regulation of chromosomal replication. ATP-DnaA binds to the origin of replication (oriC) to initiate formation of the DNA replication initiation complex once per cell cycle. Binds the DnaA box (a 9 base pair repeat at the origin) and separates the double-stranded (ds)DNA. Forms a right-handed helical filament on oriC DNA; dsDNA binds to the exterior of the filament while single-stranded (ss)DNA is stabiized in the filament's interior. The ATP-DnaA-oriC complex binds and stabilizes one strand of the AT-rich DNA unwinding element (DUE), permitting loading of DNA polymerase. After initiation quickly degrades to an ADP-DnaA complex that is not apt for DNA replication. Binds acidic phospholipids. In Geobacter sulfurreducens (strain ATCC 51573 / DSM 12127 / PCA), this protein is Chromosomal replication initiator protein DnaA.